The primary structure comprises 215 residues: Oligoribonuclease (215 aa).

The Exonuclease domain maps to 5–170 (LVWIDCEMTG…ADIHESIREL (166 aa)). Tyr-127 is a catalytic residue.

This sequence belongs to the oligoribonuclease family.

The protein localises to the cytoplasm. 3'-to-5' exoribonuclease specific for small oligoribonucleotides. This chain is Oligoribonuclease, found in Mycobacterium ulcerans (strain Agy99).